Reading from the N-terminus, the 1076-residue chain is Envelopment polyprotein (1076 aa).

Residues Met1–Ala18 form the signal peptide. Residues Trp19–Trp455 lie on the Lumenal side of the membrane. Intrachain disulfides connect Cys28–Cys51, Cys145–Cys158, Cys182–Cys329, Cys208–Cys218, Cys260–Cys307, Cys289–Cys294, Cys351–Cys354, Cys358–Cys426, and Cys378–Cys383. Residues Leu456–Leu476 traverse the membrane as a helical segment. Positions Arg477–Leu523 are golgi retention signal. Residues Arg477–Gly539 lie on the Cytoplasmic side of the membrane. Residues Gly544–Gly566 are internal signal sequence for glycoprotein C. 10 cysteine pairs are disulfide-bonded: Cys567–Cys608, Cys580–Cys590, Cys633–Cys729, Cys648–Cys845, Cys654–Cys702, Cys660–Cys709, Cys664–Cys691, Cys695–Cys700, Cys782–Cys797, and Cys813–Cys827. Residues Cys567–Trp1040 lie on the Lumenal side of the membrane. Residues Cys654–Cys660 are fusion loop. A fusion loop region spans residues Cys695 to Cys709. Residues Asn857 and Asn918 are each glycosylated (N-linked (GlcNAc...) asparagine; by host). Intrachain disulfides connect Cys912–Cys982 and Cys922–Cys925. Asn940 carries an N-linked (GlcNAc...) asparagine; by host glycan. A helical transmembrane segment spans residues Ile1041–Ile1061. Topologically, residues Thr1062–Ala1076 are cytoplasmic.

This sequence belongs to the phlebovirus envelope glycoprotein family. As to quaternary structure, heterodimer with glycoprotein C. In terms of assembly, heterodimer with glycoprotein N. Homotrimer (postfusion). In terms of processing, specific enzymatic cleavages in vivo yield mature proteins Glycoprotein C, and Glycoprotein N. Glycosylated. Post-translationally, palmitoylated.

It localises to the virion membrane. The protein resides in the host Golgi apparatus membrane. Its subcellular location is the host endoplasmic reticulum membrane. In terms of biological role, structural component of the virion that interacts with glycoprotein C. It shields the hydrophobic fusion loops of the glycoprotein C, preventing premature fusion. The glycoprotein protrusions are arranged on an icosahedral lattice, with T=12 triangulation. They are able to attach the virion to the host cell receptor CD209/DC-SIGN and to promote fusion of membranes with the late endosome after endocytosis of the virion. Plays a role in the packaging of ribonucleoproteins during virus assembly. Structural component of the virion that interacts with glycoprotein N. Acts as a class II fusion protein that is activated upon acidification and subsequent repositioning of the glycoprotein N. The glycoprotein protrusions are arranged on an icosahedral lattice, with T=12 triangulation. They are able to attach the virion to the host cell receptor CD209/DC-SIGN and to promote fusion of membranes with the late endosome after endocytosis of the virion. The polypeptide is Envelopment polyprotein (GP) (Alces americanus (American moose)).